A 256-amino-acid chain; its full sequence is Imidazole glycerol phosphate synthase subunit HisF (256 aa).

Catalysis depends on residues Asp11 and Asp130.

Belongs to the HisA/HisF family. Heterodimer of HisH and HisF.

It is found in the cytoplasm. The catalysed reaction is 5-[(5-phospho-1-deoxy-D-ribulos-1-ylimino)methylamino]-1-(5-phospho-beta-D-ribosyl)imidazole-4-carboxamide + L-glutamine = D-erythro-1-(imidazol-4-yl)glycerol 3-phosphate + 5-amino-1-(5-phospho-beta-D-ribosyl)imidazole-4-carboxamide + L-glutamate + H(+). It functions in the pathway amino-acid biosynthesis; L-histidine biosynthesis; L-histidine from 5-phospho-alpha-D-ribose 1-diphosphate: step 5/9. Its function is as follows. IGPS catalyzes the conversion of PRFAR and glutamine to IGP, AICAR and glutamate. The HisF subunit catalyzes the cyclization activity that produces IGP and AICAR from PRFAR using the ammonia provided by the HisH subunit. This Psychrobacter sp. (strain PRwf-1) protein is Imidazole glycerol phosphate synthase subunit HisF.